Reading from the N-terminus, the 37-residue chain is Large ribosomal subunit protein bL36 (37 aa).

Belongs to the bacterial ribosomal protein bL36 family.

The protein is Large ribosomal subunit protein bL36 of Bacillus anthracis (strain A0248).